A 123-amino-acid polypeptide reads, in one-letter code: Small ribosomal subunit protein uS12 (123 aa).

3-methylthioaspartic acid is present on Asp-89.

This sequence belongs to the universal ribosomal protein uS12 family. Part of the 30S ribosomal subunit. Contacts proteins S8 and S17. May interact with IF1 in the 30S initiation complex.

In terms of biological role, with S4 and S5 plays an important role in translational accuracy. Functionally, interacts with and stabilizes bases of the 16S rRNA that are involved in tRNA selection in the A site and with the mRNA backbone. Located at the interface of the 30S and 50S subunits, it traverses the body of the 30S subunit contacting proteins on the other side and probably holding the rRNA structure together. The combined cluster of proteins S8, S12 and S17 appears to hold together the shoulder and platform of the 30S subunit. The polypeptide is Small ribosomal subunit protein uS12 (Rhodospirillum centenum (strain ATCC 51521 / SW)).